The chain runs to 324 residues: Glyoxylate/hydroxypyruvate reductase B (324 aa).

Residues Arg-237 and Glu-266 contribute to the active site. His-285 acts as the Proton donor in catalysis.

It belongs to the D-isomer specific 2-hydroxyacid dehydrogenase family. GhrB subfamily. Homodimer.

The protein localises to the cytoplasm. The catalysed reaction is glycolate + NADP(+) = glyoxylate + NADPH + H(+). The enzyme catalyses (R)-glycerate + NAD(+) = 3-hydroxypyruvate + NADH + H(+). It catalyses the reaction (R)-glycerate + NADP(+) = 3-hydroxypyruvate + NADPH + H(+). Its function is as follows. Catalyzes the NADPH-dependent reduction of glyoxylate and hydroxypyruvate into glycolate and glycerate, respectively. The protein is Glyoxylate/hydroxypyruvate reductase B of Salmonella choleraesuis (strain SC-B67).